Consider the following 296-residue polypeptide: Morphine 6-dehydrogenase (296 aa).

13–22 (GVKMPALGLG) contributes to the NADP(+) binding site. The active-site Proton donor is the Tyr52. Residue His110 participates in substrate binding.

Belongs to the aldo/keto reductase family. In terms of assembly, monomer.

It carries out the reaction morphine + NAD(+) = morphinone + NADH + H(+). The enzyme catalyses morphine + NADP(+) = morphinone + NADPH + H(+). The protein operates within alkaloid degradation; codeine degradation. Its pathway is alkaloid degradation; morphine degradation. In terms of biological role, oxidizes only the C-6 hydroxy group of morphine and codeine. The polypeptide is Morphine 6-dehydrogenase (morA) (Pseudomonas putida (Arthrobacter siderocapsulatus)).